The chain runs to 115 residues: Aspartate 1-decarboxylase (115 aa).

Ser25 functions as the Schiff-base intermediate with substrate; via pyruvic acid in the catalytic mechanism. Ser25 is modified (pyruvic acid (Ser)). Thr57 contributes to the substrate binding site. Catalysis depends on Tyr58, which acts as the Proton donor. A substrate-binding site is contributed by 73-75 (GPA).

The protein belongs to the PanD family. Heterooctamer of four alpha and four beta subunits. It depends on pyruvate as a cofactor. Is synthesized initially as an inactive proenzyme, which is activated by self-cleavage at a specific serine bond to produce a beta-subunit with a hydroxyl group at its C-terminus and an alpha-subunit with a pyruvoyl group at its N-terminus.

It is found in the cytoplasm. The enzyme catalyses L-aspartate + H(+) = beta-alanine + CO2. It participates in cofactor biosynthesis; (R)-pantothenate biosynthesis; beta-alanine from L-aspartate: step 1/1. Its function is as follows. Catalyzes the pyruvoyl-dependent decarboxylation of aspartate to produce beta-alanine. This Cytophaga hutchinsonii (strain ATCC 33406 / DSM 1761 / CIP 103989 / NBRC 15051 / NCIMB 9469 / D465) protein is Aspartate 1-decarboxylase.